We begin with the raw amino-acid sequence, 301 residues long: Probable alpha-L-glutamate ligase (301 aa).

One can recognise an ATP-grasp domain in the interval 104–287 (LQLLSRRGIG…VAGMIIEHLE (184 aa)). ATP-binding positions include lysine 141, 178 to 179 (EY), aspartate 187, and 211 to 213 (RSN). Residues aspartate 248, glutamate 260, and asparagine 262 each coordinate Mg(2+). Mn(2+)-binding residues include aspartate 248, glutamate 260, and asparagine 262.

Belongs to the RimK family. Mg(2+) serves as cofactor. Mn(2+) is required as a cofactor.

The chain is Probable alpha-L-glutamate ligase from Pseudomonas putida (strain W619).